Reading from the N-terminus, the 166-residue chain is Ribosome maturation factor RimP (166 aa).

The protein belongs to the RimP family.

It localises to the cytoplasm. In terms of biological role, required for maturation of 30S ribosomal subunits. This is Ribosome maturation factor RimP from Psychrobacter sp. (strain PRwf-1).